A 793-amino-acid chain; its full sequence is DnaJ homolog subfamily C member 10 (793 aa).

Positions 1-32 (MGVWLNKDDYIRDLKRIILCFLIVYMAILVGT) are cleaved as a signal peptide. The 66-residue stretch at 35–100 (DFYSLLGVSK…DLRKKYDKYG (66 aa)) folds into the J domain. A Thioredoxin 1 domain is found at 130–232 (EIITLERREF…ESLVSFAMQH (103 aa)). Cysteines 158 and 161 form a disulfide. Trxb stretches follow at residues 235 to 350 (STVT…LPDF) and 348 to 463 (PDFE…PQNF). Thioredoxin domains are found at residues 454 to 553 (HVTT…IEDL), 557 to 662 (SVVS…SLRI), and 671 to 778 (VSTD…ISEK). Cysteines 480 and 483 form a disulfide. Residue N530 is glycosylated (N-linked (GlcNAc...) asparagine). 2 cysteine pairs are disulfide-bonded: C588-C591 and C700-C703. Residues 790 to 793 (KDEL) carry the Prevents secretion from ER motif.

As to quaternary structure, interacts with EDEM1. Interacts with HSPA5 (via its J domain).

The protein resides in the endoplasmic reticulum lumen. Endoplasmic reticulum disulfide reductase involved both in the correct folding of proteins and degradation of misfolded proteins. Required for efficient folding of proteins in the endoplasmic reticulum by catalyzing the removal of non-native disulfide bonds formed during the folding of proteins, such as LDLR. Also involved in endoplasmic reticulum-associated degradation (ERAD) by reducing incorrect disulfide bonds in misfolded glycoproteins recognized by EDEM1. Interaction with HSPA5 is required its activity, not for the disulfide reductase activity, but to facilitate the release of DNAJC10 from its substrate. Promotes apoptotic signaling pathway in response to endoplasmic reticulum stress. The polypeptide is DnaJ homolog subfamily C member 10 (DNAJC10) (Homo sapiens (Human)).